Consider the following 58-residue polypeptide: Isocitrate lyase (58 aa).

The protein belongs to the isocitrate lyase/PEP mutase superfamily. Isocitrate lyase family. As to quaternary structure, homotetramer. Mg(2+) is required as a cofactor.

The protein resides in the glyoxysome. It catalyses the reaction D-threo-isocitrate = glyoxylate + succinate. It participates in carbohydrate metabolism; glyoxylate cycle; (S)-malate from isocitrate: step 1/2. Its function is as follows. Involved in storage lipid mobilization during the growth of higher plant seedling. This chain is Isocitrate lyase, found in Helianthus annuus (Common sunflower).